The sequence spans 358 residues: Replication factor C subunit 5 (358 aa).

The protein belongs to the activator 1 small subunits family. In terms of assembly, heteropentamer of subunits rfc1, rfc2, rfc3, rfc4 and rfc5 that forms a complex (RFC) with PCNA in the presence of ATP. Two other complexes exist where rfc1 can be replaced by either ctf18 or elg1 to form the ctf18-RFC or the elg1-RFC complexes respectively.

The protein localises to the nucleus. Its function is as follows. The elongation of primed DNA templates by DNA polymerase delta and epsilon requires the action of the accessory proteins PCNA and activator 1. This Schizosaccharomyces pombe (strain 972 / ATCC 24843) (Fission yeast) protein is Replication factor C subunit 5 (rfc5).